Reading from the N-terminus, the 420-residue chain is MKTLIARHKAGEHIGICSVCSAHPLVIEAALAFDRNSTRKVLIEATSNQVNQFGGYTGMTPADFREFVFAIADKVGFARERIILGGDHLGPNCWQQENADAAMEKSVELVKAYVRAGFSKIHLDASMSCADDSIPLAPETVAERAAVLCLAAESVATDCQREQLNYVIGTEVPVPGGEASAIQSVHITQVEDAANTLRTHQKAFIARGLAEALTRVIAIVVQPGVEFDHSNIIHYQAQEAQALAQWIEKTKMVYEAHSTDYQTQTAYRELVRDHFAILKVGPALTFALREAIFALAQIEQELIAPENRSRCLAVIEEVMLDEPQYWKKYYRTGFNDSLLGIRYSLSDRIRYYWPHSRIKNSVETMMVNLEGVDIPLGMISQYLPKQFERIQSGELSAIPHQLIMDKIYDVLRAYRYGCAE.

It belongs to the GatZ/KbaZ family. GatZ subfamily. As to quaternary structure, forms a complex with GatY.

It functions in the pathway carbohydrate metabolism; D-tagatose 6-phosphate degradation; D-glyceraldehyde 3-phosphate and glycerone phosphate from D-tagatose 6-phosphate: step 2/2. Functionally, component of the tagatose-1,6-bisphosphate aldolase GatYZ that is required for full activity and stability of the Y subunit. Could have a chaperone-like function for the proper and stable folding of GatY. When expressed alone, GatZ does not show any aldolase activity. Is involved in the catabolism of galactitol. The sequence is that of D-tagatose-1,6-bisphosphate aldolase subunit GatZ from Escherichia coli O45:K1 (strain S88 / ExPEC).